The chain runs to 93 residues: MTRSIKKGPFVADHLLKKIEKFNAQGQKKVLTTWSRSSTILPVMIGHTISTYNGREFIPVFVTDQMVGHKLGEFAPTRTFKGHVKSDKKAKRR.

The protein belongs to the universal ribosomal protein uS19 family.

The protein localises to the plastid. It is found in the chloroplast. Functionally, protein S19 forms a complex with S13 that binds strongly to the 16S ribosomal RNA. The protein is Small ribosomal subunit protein uS19c of Tetradesmus obliquus (Green alga).